A 363-amino-acid polypeptide reads, in one-letter code: Insulin gene enhancer protein ISL-3 (363 aa).

2 consecutive LIM zinc-binding domains span residues 27–80 and 89–143; these read CVGC…CKRD and CAKC…RADH. A DNA-binding region (homeobox) is located at residues 191 to 250; sequence TTRVRTVLNEKQLHTLRTCYNANPRPDALMREQLVEMTGLSPRVIRVWFQNKRCKDKKRS. A disordered region spans residues 328 to 363; sequence FSESGSLGNSSGSDVTSLSSHLPDTPNSMVPSPVET. The segment covering 329–340 has biased composition (low complexity); that stretch reads SESGSLGNSSGS. A compositionally biased stretch (polar residues) spans 341–363; sequence DVTSLSSHLPDTPNSMVPSPVET.

The protein resides in the nucleus. Its function is as follows. Binds to one of the cis-acting domain of the insulin gene enhancer. May be involved in subtype specialization of primary motoneurons. The sequence is that of Insulin gene enhancer protein ISL-3 (isl3) from Oncorhynchus tshawytscha (Chinook salmon).